A 498-amino-acid polypeptide reads, in one-letter code: MAEDSESAASQQSLELDDQDTCGIDGDNEEETEHAKGSPGGDLGAKKKKKKQKRKKEKPNSGGTKSDSASDSQEIKIQPPSKNSTIPVQKLQDIQRAMELLSACQGPARNIDEAAKHRYQFWDTQPVPKLNEVITSHGAIEADKENVRQEPYSLPQGFMWDTLDLGNAEVLRELYTLLNENYVEDDDNMFRFDYSPEFLLWALRPPGWLLQWHCGVRVSSNKKLVGFISAIPANIRIYDSVKKMVEINFLCVHKKLRSKRVAPVLIREITRRVNLEGIFQAVYTAGVVLPKPVATCRYWHRSLNPRKLVEVKFSHLSRNMTLQRTMKLYRLPDATKTSGLRPMEPRDIKAVQELTNTYLKQFHLAPVMDEEEVAHWFLPQEHIIDTFVVENSSGKLTDFLSFYTLPSTVMHHPAHKSLKAAYSFYNIHTETPLLDLMSDALIIAKLKGFDVFNALDLMENKTFLEKLKFGIGDGNLQYYLYNWRCPGTESEKVGLVLQ.

The tract at residues Met-1–Pro-87 is disordered. The segment covering Glu-15 to Thr-32 has biased composition (acidic residues). Ser-38 carries the post-translational modification Phosphoserine. A compositionally biased stretch (basic residues) spans Lys-46–Glu-57. Over residues Ser-61 to Ser-72 the composition is skewed to polar residues. Residues His-117, Trp-122, Leu-250, Val-252, Ser-258, Arg-260, Val-261, and Ala-262 each contribute to the tetradecanoyl-CoA site.

This sequence belongs to the NMT family.

The protein resides in the cytoplasm. It localises to the membrane. It carries out the reaction N-terminal glycyl-[protein] + tetradecanoyl-CoA = N-tetradecanoylglycyl-[protein] + CoA + H(+). The enzyme catalyses N-terminal glycyl-L-lysyl-[protein] + tetradecanoyl-CoA = N-terminal glycyl-(N(6)-tetradecanoyl)-L-lysyl-[protein] + CoA + H(+). In terms of biological role, adds a myristoyl group to the N-terminal glycine residue of certain cellular and viral proteins. Also able to mediate N-terminal lysine myristoylation of proteins: catalyzes myristoylation of ARF6 on both 'Gly-2' and 'Lys-3'. Lysine myristoylation is required to maintain ARF6 on membranes during the GTPase cycle. In Bos taurus (Bovine), this protein is Glycylpeptide N-tetradecanoyltransferase 2 (NMT2).